The sequence spans 500 residues: NAD(P)H-quinone oxidoreductase chain 4, chloroplastic (500 aa).

Transmembrane regions (helical) follow at residues 4-24 (FPWLTTVVVFPIFAGLLLFFF), 37-57 (ICICVLELLLTTYAFCYHFEL), 87-107 (IGPILLTGFITTLATLAAWPV), 113-130 (LFYFLMLAMYSGQIGSFS), 134-154 (LLLFFIMWEFELIPVYLLLSM), 167-187 (FILYTAGGSIFLLMGVLGIGL), 207-227 (IALEILFYIGFLIAFAVKSPI), 242-262 (HYSTCMLLAGILLKMGAYGLV), 272-292 (AHSIFSPWLIIVGIIQIIYAA), 305-325 (IAYSSVSHMGFIIIGIGSISD), 330-350 (GAILQIISHGFIGAALFFLAG), 364-384 (MGGLAIPIPKIFTTFSILSMA), 386-406 (LALPGMSGFVAELIVFFGIIT), 417-437 (VITLVMAIGIILTPIYLLSML), and 463-483 (FVAISILIPVIGIGIYPDFVF).

It belongs to the complex I subunit 4 family.

The protein localises to the plastid. Its subcellular location is the chloroplast thylakoid membrane. It carries out the reaction a plastoquinone + NADH + (n+1) H(+)(in) = a plastoquinol + NAD(+) + n H(+)(out). It catalyses the reaction a plastoquinone + NADPH + (n+1) H(+)(in) = a plastoquinol + NADP(+) + n H(+)(out). This Cucumis sativus (Cucumber) protein is NAD(P)H-quinone oxidoreductase chain 4, chloroplastic.